A 688-amino-acid polypeptide reads, in one-letter code: Zinc finger protein 770 (688 aa).

Residue Lys-11 forms a Glycyl lysine isopeptide (Lys-Gly) (interchain with G-Cter in SUMO2) linkage. 3 consecutive C2H2-type zinc fingers follow at residues 27 to 49 (YVCN…YLIH), 55 to 77 (FECD…QLTH), and 81 to 103 (FKCS…QQLH). Residues Lys-112, Lys-121, and Lys-146 each participate in a glycyl lysine isopeptide (Lys-Gly) (interchain with G-Cter in SUMO2) cross-link. 3 C2H2-type zinc fingers span residues 160–182 (HACT…VLIH), 188–210 (FKCV…QLTH), and 216–238 (FQCC…KQIH). Lys-262 is covalently cross-linked (Glycyl lysine isopeptide (Lys-Gly) (interchain with G-Cter in SUMO2)). A C2H2-type 7; degenerate zinc finger spans residues 294-318 (FQCPKCEKCFESEQILNEHSCFPAR). Residues Lys-420 and Lys-437 each participate in a glycyl lysine isopeptide (Lys-Gly) (interchain with G-Cter in SUMO2) cross-link. C2H2-type zinc fingers lie at residues 475-497 (CPCD…YLIH), 503-525 (FGCN…EQTH), 623-645 (YRCS…YLIH), and 651-673 (FECS…QLTH). A Glycyl lysine isopeptide (Lys-Gly) (interchain with G-Cter in SUMO2) cross-link involves residue Lys-681.

It belongs to the krueppel C2H2-type zinc-finger protein family.

The protein localises to the nucleus. Functionally, may be involved in transcriptional regulation. This chain is Zinc finger protein 770 (ZNF770), found in Pongo abelii (Sumatran orangutan).